Reading from the N-terminus, the 298-residue chain is Mitochondrial basic amino acids transporter (298 aa).

6 consecutive transmembrane segments (helical) span residues 2-22, 61-81, 96-116, 153-172, 187-207, and 255-275; these read ALDFLAGCAGGVAGVLVGHPF, GLGSPLLGLTFINALVFGVQG, FLAGAAAGAIQCVICCPMELA, GMVSTLLRETPSFGVYFLTY, LLVPKLLLAGGTSGIASWLST, and LLRAFPVNAATFATVTVVLSY. 3 Solcar repeats span residues 2 to 86, 90 to 178, and 185 to 275; these read ALDF…TLRA, DSPL…LTRA, and DRLL…VLSY.

It belongs to the mitochondrial carrier (TC 2.A.29) family.

Its subcellular location is the mitochondrion inner membrane. It carries out the reaction L-lysine(out) + L-arginine(in) = L-lysine(in) + L-arginine(out). It catalyses the reaction L-histidine(out) + L-arginine(in) = L-histidine(in) + L-arginine(out). The enzyme catalyses L-ornithine(in) + L-arginine(out) = L-ornithine(out) + L-arginine(in). The catalysed reaction is L-homoarginine(in) + L-arginine(out) = L-homoarginine(out) + L-arginine(in). It carries out the reaction N(omega)-methyl-L-arginine(in) + L-arginine(out) = N(omega)-methyl-L-arginine(out) + L-arginine(in). It catalyses the reaction L-arginine(in) = L-arginine(out). The enzyme catalyses L-lysine(in) = L-lysine(out). The catalysed reaction is L-ornithine(in) = L-ornithine(out). It carries out the reaction L-histidine(out) = L-histidine(in). In terms of biological role, mitochondrial transporter of arginine, lysine, homoarginine, methylarginine and, to a much lesser extent, ornithine and histidine. Does not transport carnitine nor acylcarnitines. Functions by both counter-exchange and uniport mechanisms. Plays a physiological role in the import of basic amino acids into mitochondria for mitochondrial protein synthesis and amino acid degradation. In Bos taurus (Bovine), this protein is Mitochondrial basic amino acids transporter (SLC25A29).